The chain runs to 763 residues: Phosphoglycerol transferase I (763 aa).

The next 4 helical transmembrane spans lie at 1–21 (MSEL…AWKA), 26–46 (WWFA…ITLY), 77–97 (ILPG…LGWI), and 108–128 (VGYS…SPAF).

The protein belongs to the OpgB family.

The protein localises to the cell inner membrane. The catalysed reaction is a phosphatidylglycerol + a membrane-derived-oligosaccharide D-glucose = a 1,2-diacyl-sn-glycerol + a membrane-derived-oligosaccharide 6-(glycerophospho)-D-glucose.. Its pathway is glycan metabolism; osmoregulated periplasmic glucan (OPG) biosynthesis. Its function is as follows. Transfers a phosphoglycerol residue from phosphatidylglycerol to the membrane-bound nascent glucan backbones. In Salmonella agona (strain SL483), this protein is Phosphoglycerol transferase I.